The sequence spans 185 residues: MADRILVARIGAPHGVRGEVRLFVFTEDPGAVLDYDPLTDATGKKRFRIAALRAAKDHFVARIEGIADRTAAEALTNLDLFVPREALPPPDDDDTFYHADLIGLDVVDEAGVVIGKVVALQDFGAGDILEYAPTLPATKAKTLMVPFSKDAVPVVDVPGRRVVVAEAFVERRPAEPEEGEDTGGE.

Positions 92-168 (DDDTFYHADL…GRRVVVAEAF (77 aa)) constitute a PRC barrel domain.

The protein belongs to the RimM family. As to quaternary structure, binds ribosomal protein uS19.

It is found in the cytoplasm. In terms of biological role, an accessory protein needed during the final step in the assembly of 30S ribosomal subunit, possibly for assembly of the head region. Essential for efficient processing of 16S rRNA. May be needed both before and after RbfA during the maturation of 16S rRNA. It has affinity for free ribosomal 30S subunits but not for 70S ribosomes. The sequence is that of Ribosome maturation factor RimM from Xanthobacter autotrophicus (strain ATCC BAA-1158 / Py2).